We begin with the raw amino-acid sequence, 583 residues long: Chromosomal replication initiator protein DnaA (583 aa).

The segment at methionine 1–methionine 91 is domain I, interacts with DnaA modulators. Disordered regions lie at residues proline 86–valine 179 and valine 197–aspartate 232. The domain II stretch occupies residues methionine 91–threonine 235. Polar residues predominate over residues glutamate 97–aspartate 106. Basic and acidic residues-rich tracts occupy residues glutamate 126 to alanine 135 and glutamine 147 to proline 174. Residues alanine 205–valine 226 are compositionally biased toward polar residues. The segment at histidine 236–alanine 460 is domain III, AAA+ region. ATP-binding residues include glycine 280, glycine 282, lysine 283, and threonine 284. The segment at serine 461 to aspartate 583 is domain IV, binds dsDNA.

This sequence belongs to the DnaA family. In terms of assembly, oligomerizes as a right-handed, spiral filament on DNA at oriC.

The protein localises to the cytoplasm. Functionally, plays an essential role in the initiation and regulation of chromosomal replication. ATP-DnaA binds to the origin of replication (oriC) to initiate formation of the DNA replication initiation complex once per cell cycle. Binds the DnaA box (a 9 base pair repeat at the origin) and separates the double-stranded (ds)DNA. Forms a right-handed helical filament on oriC DNA; dsDNA binds to the exterior of the filament while single-stranded (ss)DNA is stabiized in the filament's interior. The ATP-DnaA-oriC complex binds and stabilizes one strand of the AT-rich DNA unwinding element (DUE), permitting loading of DNA polymerase. After initiation quickly degrades to an ADP-DnaA complex that is not apt for DNA replication. Binds acidic phospholipids. The polypeptide is Chromosomal replication initiator protein DnaA (Bifidobacterium animalis subsp. lactis (strain AD011)).